Reading from the N-terminus, the 110-residue chain is uncharacterized protein (110 aa).

A compositionally biased stretch (polar residues) spans Met1–Glu20. Positions Met1–Arg24 are disordered.

This is an uncharacterized protein from Bacillus subtilis (strain 168).